The chain runs to 170 residues: Acetyl-CoA decarbonylase/synthase complex subunit epsilon 2 (170 aa).

Belongs to the CdhB family. As to quaternary structure, heterotetramer of two alpha and two epsilon subunits. The ACDS complex is made up of alpha, epsilon, beta, gamma and delta subunits with a probable stoichiometry of (alpha(2)epsilon(2))(4)-beta(8)-(gamma(1)delta(1))(8).

Its pathway is one-carbon metabolism; methanogenesis from acetate. Functionally, part of a complex that catalyzes the reversible cleavage of acetyl-CoA, allowing growth on acetate as sole source of carbon and energy. The alpha-epsilon subcomponent functions as a carbon monoxide dehydrogenase. The precise role of the epsilon subunit is unclear; it may have a stabilizing role within the alpha(2)epsilon(2) component and/or be involved in electron transfer to FAD during a potential FAD-mediated CO oxidation. The polypeptide is Acetyl-CoA decarbonylase/synthase complex subunit epsilon 2 (cdhB2) (Methanosarcina acetivorans (strain ATCC 35395 / DSM 2834 / JCM 12185 / C2A)).